The chain runs to 198 residues: Glycerol-3-phosphate acyltransferase (198 aa).

Transmembrane regions (helical) follow at residues 10–30 (LIPI…WILV), 57–77 (GISF…ILIL), 86–106 (IMYL…WFLF), 118–138 (VVLS…AVVF), and 160–180 (AVTE…IVLI).

This sequence belongs to the PlsY family. Probably interacts with PlsX.

It localises to the cell inner membrane. The catalysed reaction is an acyl phosphate + sn-glycerol 3-phosphate = a 1-acyl-sn-glycero-3-phosphate + phosphate. It functions in the pathway lipid metabolism; phospholipid metabolism. Functionally, catalyzes the transfer of an acyl group from acyl-phosphate (acyl-PO(4)) to glycerol-3-phosphate (G3P) to form lysophosphatidic acid (LPA). This enzyme utilizes acyl-phosphate as fatty acyl donor, but not acyl-CoA or acyl-ACP. The chain is Glycerol-3-phosphate acyltransferase from Anaplasma marginale (strain Florida).